We begin with the raw amino-acid sequence, 420 residues long: MDNFINGYIPRNSFVHKLHPTTKLVIFLLLVILVFVPIGFVFQSVIFLFVTFVFFIAKLPGRFYSSAIKSITLLFLLLLFVNWFTFRDPGFYLTSDQLNSLPAIDNSKFSFWNISLFNYQDNVFSQVFAFNRGNLTNLNQLDFFYKANNADSYTKVKGIDSLASMLANNGNGLSKDKILSAFLDHNLNLYLARSWGANFAGFVVDFNPTTQLFKLTPFLANASYVLTLRAVILAFYVTQKILIMILFATVLTSTSSSVELAYGIERLLWPLKLIKIPVNVFAMTIAIAIRFVPSLLLESQRILNAQASRGLDFRNGGFLVKMRSLSSLVVPMVSIAFRNASELASAMEARGYHPAKKRSSYRQYKITWIDILALFLVFAWFVVIIFLTIRGAVFLDLGTPEWLLTGKINEQVIRDLKVSG.

Transmembrane regions (helical) follow at residues 26 to 46 (IFLL…QSVI), 66 to 86 (SAIK…WFTF), 231 to 251 (VILA…ATVL), 276 to 296 (IPVN…PSLL), 317 to 337 (GFLV…SIAF), and 369 to 389 (IDIL…FLTI).

The protein belongs to the CbiQ family.

It is found in the cell membrane. This is an uncharacterized protein from Mycoplasma genitalium (strain ATCC 33530 / DSM 19775 / NCTC 10195 / G37) (Mycoplasmoides genitalium).